The sequence spans 85 residues: Large ribosomal subunit protein bL27 (85 aa).

A disordered region spans residues M1–L21.

This sequence belongs to the bacterial ribosomal protein bL27 family.

In Geobacter sulfurreducens (strain ATCC 51573 / DSM 12127 / PCA), this protein is Large ribosomal subunit protein bL27.